Here is a 494-residue protein sequence, read N- to C-terminus: Solute carrier family 2, facilitated glucose transporter member 3 (494 aa).

The Cytoplasmic segment spans residues 1–10 (MGTTKVTTPL). A helical transmembrane segment spans residues 11–32 (IFAISIATIGSFQFGYNTGVIN). Topologically, residues 33–64 (APEAIIKDFLNYTLEERSETPPSSVLLTSLWS) are extracellular. N-linked (GlcNAc...) asparagine glycosylation is present at Asn43. Residues 65-85 (LSVAIFSVGGMIGSFSVGLFV) form a helical membrane-spanning segment. Topologically, residues 86-90 (NRFGR) are cytoplasmic. The helical transmembrane segment at 91-111 (RNSMLIVNLLAIAGGCLMGFC) threads the bilayer. Residues 112 to 118 (KIAESVE) are Extracellular-facing. A helical membrane pass occupies residues 119 to 142 (MLILGRLIIGLFCGLCTGFVPMYI). Topologically, residues 143-153 (GEISPTALRGA) are cytoplasmic. The chain crosses the membrane as a helical span at residues 154–174 (FGTLNQLGIVIGILVAQIFGL). Gln159 serves as a coordination point for D-glucose. The Extracellular segment spans residues 175–183 (KVILGTEDL). The helical transmembrane segment at 184 to 204 (WPLLLGFTILPAIIQCAALPF) threads the bilayer. The Cytoplasmic segment spans residues 205–269 (CPESPRFLLI…LFRAPNYRQP (65 aa)). Thr232 is modified (phosphothreonine). A helical membrane pass occupies residues 270 to 290 (IIISIMLQLSQQLSGINAVFY). The tract at residues 277–279 (QLS) is important for selectivity against fructose. D-glucose is bound by residues 280-281 (QQ) and Asn286. Residues 291 to 304 (YSTGIFKDAGVQEP) lie on the Extracellular side of the membrane. The chain crosses the membrane as a helical span at residues 305–325 (VYATIGAGVVNTIFTVVSVFL). A D-glucose-binding site is contributed by Asn315. Residues 326–331 (VERAGR) are Cytoplasmic-facing. Residues 332–352 (RTLHLIGLGGMAFCSILMTIS) form a helical membrane-spanning segment. Residues 353 to 363 (LLLKDNYSWMS) lie on the Extracellular side of the membrane. Residues 364-389 (FICIGAILVFVAFFEIGPGPIPWFIV) form a helical membrane-spanning segment. D-glucose contacts are provided by Glu378 and Trp386. The Cytoplasmic segment spans residues 390-399 (AELFGQGPRP). Residues 400–420 (AAMAVAGCSNWTSNFLVGLLF) form a helical membrane-spanning segment. Residues 421-429 (PSATFYLGA) are Extracellular-facing. Residues 430–450 (YVFIVFTVFLVIFWVFTFFKV) form a helical membrane-spanning segment. Topologically, residues 451–494 (PETRGRTFEEITRAFEGQVQTGTRGEKGPIMEMNSIQPTKDTNA) are cytoplasmic. The interval 473 to 494 (TRGEKGPIMEMNSIQPTKDTNA) is disordered. The segment covering 484 to 494 (NSIQPTKDTNA) has biased composition (polar residues). Ser485 bears the Phosphoserine mark. Thr492 is subject to Phosphothreonine.

This sequence belongs to the major facilitator superfamily. Sugar transporter (TC 2.A.1.1) family. Glucose transporter subfamily. In terms of assembly, interacts with SMIM43; the interaction may promote SLC2A3-mediated glucose transport to meet the energy needs of mesendoderm differentiation. Detected in placenta.

The protein resides in the cell membrane. It is found in the perikaryon. Its subcellular location is the cell projection. It carries out the reaction D-glucose(out) = D-glucose(in). The catalysed reaction is D-galactose(in) = D-galactose(out). Its activity is regulated as follows. Deoxyglucose transport is inhibited by D-glucose, D-galactose and maltose. Galactose transport is inhibited by D-glucose and maltose. In terms of biological role, facilitative glucose transporter. Can also mediate the uptake of various other monosaccharides across the cell membrane. Mediates the uptake of glucose, 2-deoxyglucose, galactose, mannose, xylose and fucose, and probably also dehydroascorbate. Does not mediate fructose transport. Required for mesendoderm differentiation. The protein is Solute carrier family 2, facilitated glucose transporter member 3 of Ovis aries (Sheep).